The chain runs to 316 residues: Phospholipase A1 3 (316 aa).

Positions 1-4 are cleaved as a signal peptide; the sequence is ADDL. Positions 5-14 are excised as a propeptide; it reads TTLRNGTLDR. C20 and C103 are disulfide-bonded. Catalysis depends on S153, which acts as the Nucleophile. D181 serves as the catalytic Charge relay system. 2 disulfide bridges follow: C192–C197 and C235–C240. Catalysis depends on H242, which acts as the Charge relay system. 3 disulfide bridges follow: C257-C284, C258-C309, and C277-C282.

Belongs to the AB hydrolase superfamily. Lipase family. In terms of tissue distribution, expressed by the venom gland.

The protein localises to the secreted. The catalysed reaction is a 1,2-diacyl-sn-glycero-3-phosphocholine + H2O = a 2-acyl-sn-glycero-3-phosphocholine + a fatty acid + H(+). In terms of biological role, catalyzes the hydrolysis of phosphatidylcholine with phospholipase A1 activity. May act as an allergen and induce hemolytic activity. This is Phospholipase A1 3 from Polistes dominula (European paper wasp).